The sequence spans 300 residues: Neutral protease NprE (300 aa).

Residue D139 coordinates Ca(2+). H143 serves as a coordination point for Zn(2+). The active site involves E144. Zn(2+) contacts are provided by H147 and E167. Positions 178, 181, 183, and 186 each coordinate Ca(2+). Residue H228 is the Proton donor of the active site.

It belongs to the peptidase M4 family. Requires Ca(2+) as cofactor. The cofactor is Zn(2+).

Its subcellular location is the secreted. It catalyses the reaction Similar, but not identical, to that of thermolysin.. In terms of biological role, extracellular zinc metalloprotease. The chain is Neutral protease NprE (nprE) from Bacillus pumilus (Bacillus mesentericus).